Here is a 203-residue protein sequence, read N- to C-terminus: Signal peptidase I (203 aa).

Residues 1-26 are disordered; sequence MSSESDSPTPQTPPAQPAASQPKADS. Topologically, residues 1-33 are cytoplasmic; the sequence is MSSESDSPTPQTPPAQPAASQPKADSPLMEGIK. Positions 17-26 are enriched in low complexity; it reads PAASQPKADS. A helical transmembrane segment spans residues 34-50; the sequence is TIGLSVVLALGIRTFVA. At 51–203 the chain is on the extracellular side; sequence EARYIPSESM…LGELGPPPSY (153 aa). Catalysis depends on residues serine 59 and lysine 109.

This sequence belongs to the peptidase S26 family.

It localises to the cell membrane. It catalyses the reaction Cleavage of hydrophobic, N-terminal signal or leader sequences from secreted and periplasmic proteins.. In Leptolyngbya laminosa (Phormidium laminosum), this protein is Signal peptidase I (lepB).